The sequence spans 96 residues: UPF0235 protein Pfl01_5322 (96 aa).

This sequence belongs to the UPF0235 family.

In Pseudomonas fluorescens (strain Pf0-1), this protein is UPF0235 protein Pfl01_5322.